The chain runs to 398 residues: ATP-dependent RNA helicase eIF4A (398 aa).

The short motif at 25 to 53 is the Q motif element; the sequence is DSFDSMDLKPELLRGVYAYGFERPSAIQQ. The Helicase ATP-binding domain occupies 56–226; it reads IKPIIAGHDV…TKFMRDPIRI (171 aa). 69-76 is an ATP binding site; that stretch reads AQSGTGKT. A DEAD box motif is present at residues 174–177; that stretch reads DEAD. Positions 237 to 398 constitute a Helicase C-terminal domain; it reads GIKQFYIAVE…EMPMNVADLI (162 aa).

Belongs to the DEAD box helicase family. eIF4A subfamily. In terms of assembly, component of the eIF4F complex, which composition varies with external and internal environmental conditions. It is composed of at least eIF4A, eIF4E and eIF4G.

The protein resides in the cytoplasm. It catalyses the reaction ATP + H2O = ADP + phosphate + H(+). Functionally, ATP-dependent RNA helicase which is a subunit of the eIF4F complex involved in cap recognition and is required for mRNA binding to ribosome. In the current model of translation initiation, eIF4A unwinds RNA secondary structures in the 5'-UTR of mRNAs which is necessary to allow efficient binding of the small ribosomal subunit, and subsequent scanning for the initiator codon. The sequence is that of ATP-dependent RNA helicase eIF4A (tif1) from Aspergillus niger (strain ATCC MYA-4892 / CBS 513.88 / FGSC A1513).